A 699-amino-acid polypeptide reads, in one-letter code: Lutropin-choriogonadotropic hormone receptor (699 aa).

An N-terminal signal peptide occupies residues 1 to 26 (MKQRFSALQLLKLLLLLQPPLPRALR). The 40-residue stretch at 27 to 66 (EALCPEPCNCVPDGALRCPGPTAGLTRLSLAYLPVKVIPS) folds into the LRRNT domain. Over 27-363 (EALCPEPCNC…EDIMGYDFLR (337 aa)) the chain is Extracellular. 3 LRR repeats span residues 96-115 (NLLN…RYIE), 124-145 (RLKY…TKVF), and 149-171 (SNFI…AFQG). The N-linked (GlcNAc...) asparagine glycan is linked to Asn-99. N-linked (GlcNAc...) asparagine glycosylation is found at Asn-174 and Asn-195. LRR repeat units follow at residues 175 to 196 (ESVT…AFNG), 198 to 220 (TLTS…AFRG), and 223 to 244 (GPKT…GLES). 3 N-linked (GlcNAc...) asparagine glycosylation sites follow: Asn-291, Asn-299, and Asn-313. A Sulfotyrosine modification is found at Tyr-331. Residues 364–385 (VLIWLINILAIMGNMTVLFVLL) traverse the membrane as a helical segment. Topologically, residues 386–395 (TSRYKLTVPR) are cytoplasmic. The chain crosses the membrane as a helical span at residues 396–416 (FLMCNLSFADFCMGLYLLLIA). At 417–439 (SVDSQTKGQYYNHAIDWQTGSGC) the chain is on the extracellular side. A disulfide bridge connects residues Cys-439 and Cys-514. The chain crosses the membrane as a helical span at residues 440–462 (STAGFFTVFASELSVYTLTVITL). The Cytoplasmic segment spans residues 463-482 (ERWHTITYAIHLDQKLRLRH). Residues 483 to 505 (AILIMLGGWLFSSLIAMLPLVGV) form a helical membrane-spanning segment. Residues 506 to 525 (SNYMKVSICFPMDVETTLSQ) are Extracellular-facing. Residues 526–549 (VYILTILILNVVAFFIICACYIKI) traverse the membrane as a helical segment. Over 550 to 570 (YFAVRNPELMATNKDTKIAKK) the chain is Cytoplasmic. Residues 571–594 (MAILIFTDFTCMAPISFFAISAAF) traverse the membrane as a helical segment. Residues 595–605 (KVPLITVTNSK) lie on the Extracellular side of the membrane. The chain crosses the membrane as a helical span at residues 606-627 (VLLVLFYPINSCANPFLYAIFT). The Cytoplasmic segment spans residues 628–699 (KTFQRDFFLL…LLDKTRYTEC (72 aa)). Residues Cys-643 and Cys-644 are each lipidated (S-palmitoyl cysteine).

Belongs to the G-protein coupled receptor 1 family. FSH/LSH/TSH subfamily. Post-translationally, sulfated. Gonadal and thyroid cells.

It is found in the cell membrane. Functionally, receptor for lutropin-choriogonadotropic hormone. The activity of this receptor is mediated by G proteins which activate adenylate cyclase. This chain is Lutropin-choriogonadotropic hormone receptor (LHCGR), found in Homo sapiens (Human).